We begin with the raw amino-acid sequence, 308 residues long: Maspardin (308 aa).

The region spanning 87–159 is the AB hydrolase-1 domain; the sequence is FCDGFRKLLD…NSFWLMPAFM (73 aa). Phosphoserine is present on Ser-304.

It belongs to the AB hydrolase superfamily. In terms of assembly, interacts with CD4. Interacts with ALDH16A1.

The protein resides in the cytoplasm. Functionally, may play a role as a negative regulatory factor in CD4-dependent T-cell activation. The sequence is that of Maspardin (SPG21) from Pongo abelii (Sumatran orangutan).